The chain runs to 651 residues: Histone-lysine N-methyltransferase family member SUVH2 (651 aa).

Residues 1-28 (MSTLLPFPDLNLMPDSQSSTAGTTAGDT) are disordered. Positions 15–28 (DSQSSTAGTTAGDT) are enriched in low complexity. The region spanning 202–358 (DKHIVGPVTG…KFRLVRIEGQ (157 aa)) is the YDG domain. The Pre-SET domain maps to 434-492 (TGCECKLSCTDDCLCARKNGGEFAYDDNGHLLKGKHVVFECGEFCTCGPSCKSRVTQKG). Residues cysteine 436, cysteine 438, cysteine 442, cysteine 446, cysteine 448, cysteine 474, cysteine 478, cysteine 480, and cysteine 484 each contribute to the Zn(2+) site. The SET domain occupies 495 to 638 (NRLEVFRSKE…PLAELSLDYG (144 aa)).

It belongs to the class V-like SAM-binding methyltransferase superfamily. Histone-lysine methyltransferase family. Suvar3-9 subfamily. Self-interacts. Interacts with DNA-directed RNA polymerase V subunit NRPE1 and with DRD1 and DMS3. Binds to MORC1/CRT1. As to expression, expressed at low levels in leaves stems and flowers.

Its subcellular location is the nucleus. It localises to the chromosome. The protein localises to the centromere. Histone methyltransferase family member that plays a central role in gene silencing. Together with MORC6 and SUVH9, regulates the silencing of some transposable elements (TEs). According to PubMed:15775980, it is required for normal methylation of 'Lys-9' and 'Lys-27' of histone H3, 'Lys-20' of H4, and cytosine, but PubMed:19043555 see no significant effect on histone methylation when the gene is mutated. According to PubMed:19043555, the protein does not bind S-adenosyl-L-methionine and lacks methyltransferase activity. Instead, it may function downstream of DRM2 in RNA-directed DNA methylation, binding to methylated DNA and recruiting DNA-directed RNA polymerase V to chromatin. This Arabidopsis thaliana (Mouse-ear cress) protein is Histone-lysine N-methyltransferase family member SUVH2 (SUVH2).